An 880-amino-acid chain; its full sequence is Kinesin heavy chain (880 aa).

The Kinesin motor domain occupies 4–327 (SIKVVCRFRP…LRFGMRAKAI (324 aa)). ATP is bound by residues 85-92 (GQTGAGKS) and 235-242 (GSEKVGKT). Residues 388–426 (VSGAKAAAAQTPRPSTPSRLATESRAETPVAERSATPGI) are disordered. The span at 399–408 (PRPSTPSRLA) shows a compositional bias: polar residues. The stretch at 428-849 (IDKDEREEFL…QEKLTTASHR (422 aa)) forms a coiled coil.

Belongs to the TRAFAC class myosin-kinesin ATPase superfamily. Kinesin family. Kinesin subfamily.

It is found in the cytoplasm. The protein resides in the cytoskeleton. Functionally, kinesin is a microtubule-associated force-producing protein that may play a role in organelle transport. Its motor activity is directed toward the microtubule's plus end. The protein is Kinesin heavy chain (klp1) of Botryotinia fuckeliana (Noble rot fungus).